Consider the following 185-residue polypeptide: Elongation factor P (185 aa).

Belongs to the elongation factor P family.

It is found in the cytoplasm. It participates in protein biosynthesis; polypeptide chain elongation. Involved in peptide bond synthesis. Stimulates efficient translation and peptide-bond synthesis on native or reconstituted 70S ribosomes in vitro. Probably functions indirectly by altering the affinity of the ribosome for aminoacyl-tRNA, thus increasing their reactivity as acceptors for peptidyl transferase. The chain is Elongation factor P from Moorella thermoacetica (strain ATCC 39073 / JCM 9320).